The following is a 109-amino-acid chain: MTNCIVELTDGIFKQYILESKKAVLVDFWAEWCNPCKILAPILEDIAKEYEHKLIVTKINIDKNPNTAPKYSIRGIPALLLFKNSELVGTKVGALSKVQLKDFLNLYLK.

In terms of domain architecture, Thioredoxin spans 2 to 109 (TNCIVELTDG…LKDFLNLYLK (108 aa)). An intrachain disulfide couples cysteine 33 to cysteine 36.

The protein belongs to the thioredoxin family.

Participates in various redox reactions through the reversible oxidation of its active center dithiol to a disulfide and catalyzes dithiol-disulfide exchange reactions. This is Thioredoxin (trxA) from Buchnera aphidicola subsp. Baizongia pistaciae (strain Bp).